A 302-amino-acid polypeptide reads, in one-letter code: Probable alpha-L-glutamate ligase (302 aa).

One can recognise an ATP-grasp domain in the interval 112-294 (LQLLLKTGVP…IAAEIIDYIE (183 aa)). Residues K148, 185–186 (DF), D194, and 218–220 (RAN) each bind ATP. Residues D255, E267, and N269 each coordinate Mg(2+). Mn(2+)-binding residues include D255, E267, and N269.

This sequence belongs to the RimK family. It depends on Mg(2+) as a cofactor. The cofactor is Mn(2+).

This Haemophilus influenzae (strain 86-028NP) protein is Probable alpha-L-glutamate ligase.